Here is a 512-residue protein sequence, read N- to C-terminus: Protein maelstrom homolog (512 aa).

Residues 9–75 (AKGPFYFFMM…NPKEAGGYGE (67 aa)) constitute a DNA-binding region (HMG box). Disordered regions lie at residues 49 to 72 (APHE…EAGG), 360 to 421 (RMSK…GTRA), and 439 to 465 (QSAN…DPQS). A compositionally biased stretch (polar residues) spans 360-370 (RMSKLTTTSDN). The segment covering 379–388 (RSTDRTDRDV) has biased composition (basic and acidic residues). Polar residues-rich tracts occupy residues 393–421 (IYSS…GTRA) and 439–449 (QSANRSPTKKN). A compositionally biased stretch (basic and acidic residues) spans 451-464 (WSRENKLTEVRDPQ).

The protein belongs to the maelstrom family.

The protein resides in the cytoplasm. It localises to the nucleus. Functionally, plays a central role during gametogenesis by repressing transposable elements and preventing their mobilization, which is essential for the germline integrity. Probably acts via the piRNA metabolic process, which mediates the repression of transposable elements during meiosis by forming complexes composed of piRNAs and Piwi proteins and governs the repression of transposons. This is Protein maelstrom homolog (mael) from Culex quinquefasciatus (Southern house mosquito).